We begin with the raw amino-acid sequence, 184 residues long: Thymidine kinase (184 aa).

Residues 10–17 (GPMYSGKT) and 83–86 (DEVQ) contribute to the ATP site. The active-site Proton acceptor is the glutamate 84. Residues cysteine 140, cysteine 143, cysteine 173, and cysteine 176 each contribute to the Zn(2+) site.

The protein belongs to the thymidine kinase family. In terms of assembly, homotetramer.

The protein localises to the cytoplasm. It catalyses the reaction thymidine + ATP = dTMP + ADP + H(+). This chain is Thymidine kinase, found in Thermotoga petrophila (strain ATCC BAA-488 / DSM 13995 / JCM 10881 / RKU-1).